The sequence spans 299 residues: HTH-type transcriptional regulator CrgA (299 aa).

The HTH lysR-type domain occupies 1–60 (MKTNSEELTVFVQVVESGSFSRAAEQLAMANSAVSRIVKRLEEKLGVNLLNRTTRQLSLT). Positions 20 to 39 (FSRAAEQLAMANSAVSRIVK) form a DNA-binding region, H-T-H motif.

It belongs to the LysR transcriptional regulatory family. As to quaternary structure, forms oligomers. Oligomerization is required for DNA binding.

Its function is as follows. Involved in the regulation of bacterial adhesion to host epithelial cells. May play a central regulatory role in meningococcal adhesion, particularly in switching from initial adhesion to intimate adhesion by downregulating the bacterial surface structures that hinder this adhesion. During intimate adhesion, negatively regulates the expression of pilC1, encoding a pilus-associated protein, pilE, encoding the pilin, and sia genes, encoding the capsule. Also negatively regulates its own expression. May also regulate other genes that are involved in intimate adhesion. Binds specifically to the promoter region of pilC1 and crgA (both harboring a CREN element), and pilE and sia (both devoid of a CREN element). Acts through interaction with RNA polymerase (RNAP). Interaction with RNAP leads to the production of short abortive transcripts, suggesting that CrgA may act by preventing RNAP from clearing the promoter. This is HTH-type transcriptional regulator CrgA from Neisseria meningitidis serogroup C (strain 8013).